The primary structure comprises 480 residues: Alpha,alpha-trehalose-phosphate synthase [UDP-forming] 2 (480 aa).

Tyrosine 97 and aspartate 151 together coordinate D-glucose 6-phosphate. Positions 288 and 293 each coordinate UDP. Positions 288 and 293 each coordinate UDP-alpha-D-glucose. Arginine 326 is a D-glucose 6-phosphate binding site. 387 to 395 serves as a coordination point for UDP-alpha-D-glucose; the sequence is DGMNLVSFE. 391 to 395 contacts UDP; it reads LVSFE.

The protein belongs to the glycosyltransferase 20 family.

The catalysed reaction is D-glucose 6-phosphate + UDP-alpha-D-glucose = alpha,alpha-trehalose 6-phosphate + UDP + H(+). Its pathway is carbohydrate biosynthesis. In terms of biological role, synthase catalytic subunit of the trehalose synthase complex that catalyzes the production of trehalose from glucose-6-phosphate and UDP-alpha-D-glucose in a two step process. The sequence is that of Alpha,alpha-trehalose-phosphate synthase [UDP-forming] 2 from Aspergillus niger.